We begin with the raw amino-acid sequence, 1270 residues long: Nuclear exosome regulator NRDE2 (1270 aa).

Disordered regions lie at residues 1-22 (MFRAYGNNGLKNPERISGENPD) and 119-209 (SVKS…HTLM). A compositionally biased stretch (polar residues) spans 119 to 135 (SVKSLNGCQDPPETSQQ). Over residues 164–184 (QRSRSREKKRRKKERRRKRSS) the composition is skewed to basic residues. Basic and acidic residues predominate over residues 192–204 (RSRDRSSRARDTS).

It belongs to the NRDE2 family. As to quaternary structure, interacts with nrde-3.

It is found in the nucleus. It localises to the nucleus speckle. The protein resides in the nucleolus. In terms of biological role, protein of the nuclear speckles that regulates RNA exosomal degradation. Involved in short interfering RNAs-mediated silencing in nuclei. Functions with nrde-3 in the nuclear RNA-mediated gene silencing (RNAi) pathway to regulate gene expression via inhibition of RNA polymerases I and II during the elongation phase of transcription. Required for exogenous RNAi-induced H3K27 methylation. The polypeptide is Nuclear exosome regulator NRDE2 (nrde-2) (Caenorhabditis elegans).